The following is a 273-amino-acid chain: NH(3)-dependent NAD(+) synthetase (273 aa).

45-52 lines the ATP pocket; the sequence is GISGGQDS. Mg(2+) is bound at residue Asp51. Residue Arg139 participates in deamido-NAD(+) binding. Thr159 serves as a coordination point for ATP. Glu164 serves as a coordination point for Mg(2+). Deamido-NAD(+)-binding residues include Lys172 and Asp179. Lys188 and Thr210 together coordinate ATP. Deamido-NAD(+) is bound at residue 259-260; that stretch reads HK.

This sequence belongs to the NAD synthetase family. As to quaternary structure, homodimer.

It catalyses the reaction deamido-NAD(+) + NH4(+) + ATP = AMP + diphosphate + NAD(+) + H(+). It participates in cofactor biosynthesis; NAD(+) biosynthesis; NAD(+) from deamido-NAD(+) (ammonia route): step 1/1. In terms of biological role, catalyzes the ATP-dependent amidation of deamido-NAD to form NAD. Uses ammonia as a nitrogen source. The sequence is that of NH(3)-dependent NAD(+) synthetase from Bacillus pumilus (strain SAFR-032).